The following is a 260-amino-acid chain: Acetylglutamate kinase (260 aa).

Residues 46–47 (GG), R68, and N160 each bind substrate.

The protein belongs to the acetylglutamate kinase family. ArgB subfamily.

The protein resides in the cytoplasm. It carries out the reaction N-acetyl-L-glutamate + ATP = N-acetyl-L-glutamyl 5-phosphate + ADP. It participates in amino-acid biosynthesis; L-arginine biosynthesis; N(2)-acetyl-L-ornithine from L-glutamate: step 2/4. In terms of biological role, catalyzes the ATP-dependent phosphorylation of N-acetyl-L-glutamate. This chain is Acetylglutamate kinase, found in Shewanella denitrificans (strain OS217 / ATCC BAA-1090 / DSM 15013).